Consider the following 375-residue polypeptide: Succinyl-diaminopimelate desuccinylase (375 aa).

Position 66 (H66) interacts with Zn(2+). D68 is an active-site residue. Position 99 (D99) interacts with Zn(2+). E130 functions as the Proton acceptor in the catalytic mechanism. 3 residues coordinate Zn(2+): E131, E159, and H345.

This sequence belongs to the peptidase M20A family. DapE subfamily. In terms of assembly, homodimer. It depends on Zn(2+) as a cofactor. The cofactor is Co(2+).

The enzyme catalyses N-succinyl-(2S,6S)-2,6-diaminopimelate + H2O = (2S,6S)-2,6-diaminopimelate + succinate. It participates in amino-acid biosynthesis; L-lysine biosynthesis via DAP pathway; LL-2,6-diaminopimelate from (S)-tetrahydrodipicolinate (succinylase route): step 3/3. Its function is as follows. Catalyzes the hydrolysis of N-succinyl-L,L-diaminopimelic acid (SDAP), forming succinate and LL-2,6-diaminopimelate (DAP), an intermediate involved in the bacterial biosynthesis of lysine and meso-diaminopimelic acid, an essential component of bacterial cell walls. In Xanthobacter autotrophicus (strain ATCC BAA-1158 / Py2), this protein is Succinyl-diaminopimelate desuccinylase.